The chain runs to 276 residues: Protein-glutamine gamma-glutamyltransferase (276 aa).

This sequence belongs to the bacillus TGase family.

It catalyses the reaction L-glutaminyl-[protein] + L-lysyl-[protein] = [protein]-L-lysyl-N(6)-5-L-glutamyl-[protein] + NH4(+). Its function is as follows. Probably plays a role in the assembly of the spore coat proteins by catalyzing epsilon-(gamma-glutamyl)lysine cross-links. This chain is Protein-glutamine gamma-glutamyltransferase, found in Bacillus cereus (strain AH187).